The primary structure comprises 286 residues: Toxin zeta (286 aa).

Position 39-46 (39-46) interacts with ATP; sequence GQPGSGKT. Residues 249–286 form a disordered region; the sequence is MVQNQHQETPEFKAIQQKMESLQPPTPPIPKTPKLPGI. Positions 272–286 are enriched in pro residues; that stretch reads PPTPPIPKTPKLPGI.

Belongs to the zeta toxin family. In terms of assembly, in the presence of the epsilon antitoxin, forms an inactive PezA(2)PezT(2) heterotetramer.

It catalyses the reaction UDP-N-acetyl-alpha-D-glucosamine + ATP = UDP-N-acetyl-alpha-D-glucosamine 3'-phosphate + ADP + H(+). Toxic component of a type II toxin-antitoxin (TA) system. Phosphorylates UDP-N-acetyl-D-glucosamine (UNAG) on the 3'-hydroxyl group of the N-acetyl-D-glucosamine moiety, yielding UNAG-3P. UNAG-3P inhibits MurA, the first committed step in cell wall synthesis, which is then blocked. Phosphorylation is inhibited by cognate epsilon antitoxin. Part of a postsegregational killing (PSK) system involved in the killing of plasmid-free cells. The zeta toxin induces programmed cell death. In Enterococcus hirae, this protein is Toxin zeta.